The primary structure comprises 400 residues: CinA-like protein (400 aa).

Belongs to the CinA family.

The sequence is that of CinA-like protein from Shigella flexneri.